Here is a 432-residue protein sequence, read N- to C-terminus: Luc7-like protein 3 (432 aa).

Met1 carries the post-translational modification N-acetylmethionine. Phosphoserine is present on residues Ser3, Ser110, and Ser115. Positions 124–181 (KNEEKIQVLTDKIDVLLQQIEELGSEGKVEEAQGMMKLVEQLKEERELLRSTTSTIES) form a coiled coil. Position 231 is an N6-acetyllysine (Lys231). Over residues 234 to 287 (LRKRTEEPDRDERLKKEKQEREEREKEREREREERERKRRREEEEREKERARDR) the composition is skewed to basic and acidic residues. The segment at 234–432 (LRKRTEEPDR…IKSEGDTQSN (199 aa)) is disordered. Over residues 288 to 301 (ERRKRSRSRSRHSS) the composition is skewed to basic residues. The segment covering 302–311 (RTSDRRCSRS) has biased composition (basic and acidic residues). Over residues 312 to 367 (RDHKRSRSRERRRSRSRDRRRSRSHDRSERKHRSRSRDRRRSKSRDRKSYKHRSKS) the composition is skewed to basic residues. The segment covering 368 to 414 (RDREQDRKSKEKEKRGSDDKKSSVKSGSREKQSEDTNTESKESDTKN) has biased composition (basic and acidic residues). Ser420 carries the phosphoserine modification. Over residues 421 to 432 (EDIKSEGDTQSN) the composition is skewed to basic and acidic residues. A Glycyl lysine isopeptide (Lys-Gly) (interchain with G-Cter in SUMO1); alternate cross-link involves residue Lys424. Lys424 is covalently cross-linked (Glycyl lysine isopeptide (Lys-Gly) (interchain with G-Cter in SUMO2); alternate). Ser425 and Ser431 each carry phosphoserine.

Belongs to the Luc7 family. In terms of assembly, may interact with SFRS1 and form homodimers. Interacts with JMJD6. Interacts with RBM25. Interacts with RSRC1 (via Arg/Ser-rich domain). Interacts with RRP1B. Phosphorylated in vitro by SRPK1, SRPK2 and CLK1. In terms of tissue distribution, widely expressed. Highest levels in heart, brain, pancreas, thymus, ovary, small intestine and peripheral blood leukocytes, as well as cerebellum, putamen and pituitary gland. Lowest levels in lung, liver and kidney. Also expressed in fetal tissues, including brain, heart, kidney, thymus and lung.

The protein localises to the nucleus speckle. In terms of biological role, binds cAMP regulatory element DNA sequence. May play a role in RNA splicing. This chain is Luc7-like protein 3 (LUC7L3), found in Homo sapiens (Human).